Reading from the N-terminus, the 141-residue chain is Large ribosomal subunit protein uL13 (141 aa).

It belongs to the universal ribosomal protein uL13 family. In terms of assembly, part of the 50S ribosomal subunit.

This protein is one of the early assembly proteins of the 50S ribosomal subunit, although it is not seen to bind rRNA by itself. It is important during the early stages of 50S assembly. The polypeptide is Large ribosomal subunit protein uL13 (Helicobacter acinonychis (strain Sheeba)).